Consider the following 492-residue polypeptide: Stomatal closure-related actin-binding protein 2 (492 aa).

Residues 112-132 (LKKLRDALETMRGRMDGRNRE) adopt a coiled-coil conformation.

This sequence belongs to the SCAB family. In terms of tissue distribution, expressed in roots, stems, leaves, siliques and flowers.

It is found in the cytoplasm. The protein resides in the cytoskeleton. In terms of biological role, probable plant-specific actin binding protein that bundles and stabilizes microfilaments (MFs). The sequence is that of Stomatal closure-related actin-binding protein 2 from Arabidopsis thaliana (Mouse-ear cress).